The following is an 856-amino-acid chain: DNA mismatch repair protein MutS (856 aa).

611–618 (GPNMGGKS) contributes to the ATP binding site.

It belongs to the DNA mismatch repair MutS family.

Functionally, this protein is involved in the repair of mismatches in DNA. It is possible that it carries out the mismatch recognition step. This protein has a weak ATPase activity. This chain is DNA mismatch repair protein MutS, found in Histophilus somni (strain 129Pt) (Haemophilus somnus).